The chain runs to 301 residues: General transcription and DNA repair factor IIH subunit TFB4 (301 aa).

A C4-type zinc finger spans residues 259 to 276 (CSVCLSIFCEHHKKCSTC).

Belongs to the TFB4 family. In terms of assembly, component of the 7-subunit TFIIH core complex composed of XPB, XPD, TFB1/GTF2H1, GTF2H2/P44, TFB4/GTF2H3, TFB2/GTF2H4 and TFB5/GTF2H5, which is active in NER. The core complex associates with the 3-subunit CDK-activating kinase (CAK) module composed of CYCH1/cyclin H1, CDKD and MAT1/At4g30820 to form the 10-subunit holoenzyme (holo-TFIIH) active in transcription.

Its subcellular location is the nucleus. Component of the general transcription and DNA repair factor IIH (TFIIH) core complex, which is involved in general and transcription-coupled nucleotide excision repair (NER) of damaged DNA and, when complexed to CAK, in RNA transcription by RNA polymerase II. In NER, TFIIH acts by opening DNA around the lesion to allow the excision of the damaged oligonucleotide and its replacement by a new DNA fragment. In transcription, TFIIH has an essential role in transcription initiation. When the pre-initiation complex (PIC) has been established, TFIIH is required for promoter opening and promoter escape. Phosphorylation of the C-terminal tail (CTD) of the largest subunit of RNA polymerase II by the kinase module CAK controls the initiation of transcription. This Arabidopsis thaliana (Mouse-ear cress) protein is General transcription and DNA repair factor IIH subunit TFB4.